Consider the following 698-residue polypeptide: DNA-directed RNA polymerase subunit beta' (698 aa).

Residues Cys-69, Cys-71, Cys-89, and Cys-92 each coordinate Zn(2+). The Mg(2+) site is built by Asp-509, Asp-511, and Asp-513.

Belongs to the RNA polymerase beta' chain family. RpoC1 subfamily. In plastids the minimal PEP RNA polymerase catalytic core is composed of four subunits: alpha, beta, beta', and beta''. When a (nuclear-encoded) sigma factor is associated with the core the holoenzyme is formed, which can initiate transcription. Mg(2+) is required as a cofactor. Requires Zn(2+) as cofactor.

It localises to the plastid. Its subcellular location is the chloroplast. It carries out the reaction RNA(n) + a ribonucleoside 5'-triphosphate = RNA(n+1) + diphosphate. Functionally, DNA-dependent RNA polymerase catalyzes the transcription of DNA into RNA using the four ribonucleoside triphosphates as substrates. This Cryptomeria japonica (Japanese cedar) protein is DNA-directed RNA polymerase subunit beta'.